We begin with the raw amino-acid sequence, 450 residues long: Deoxyguanosinetriphosphate triphosphohydrolase-like protein (450 aa).

In terms of domain architecture, HD spans 61 to 201 (RLTHSLEVAQ…AKLAPELNAD (141 aa)).

It belongs to the dGTPase family. Type 2 subfamily.

This is Deoxyguanosinetriphosphate triphosphohydrolase-like protein from Pasteurella multocida (strain Pm70).